We begin with the raw amino-acid sequence, 470 residues long: 5-hydroxytryptamine receptor 2A (470 aa).

At 1-80 the chain is on the extracellular side; sequence MDILCEENTS…LQEKNWSALL (80 aa). N-linked (GlcNAc...) asparagine glycosylation is present at Asn-38. A helical transmembrane segment spans residues 81 to 97; it reads TAVVIILTIAGNILVIM. The Cytoplasmic segment spans residues 98–111; that stretch reads AVSLEKKLQNATNY. Residues 112-137 form a helical membrane-spanning segment; sequence FLMSLAIADMLLGFLVMPVSTLTILY. The Extracellular segment spans residues 138-146; sequence GYRWPLPSK. Residues 147–171 form a helical membrane-spanning segment; it reads LCAVWIYLDVLFSTASIMHLCAISL. Cys-148 and Cys-227 form a disulfide bridge. Serotonin is bound at residue Asp-155. Residues 172 to 174 carry the DRY motif; important for ligand-induced conformation changes motif; it reads DRY. Over 172–191 the chain is Cytoplasmic; the sequence is DRYVAIQNPIHHSRFNSRTK. Residues 192–215 form a helical membrane-spanning segment; sequence AFLKIIAVWTISVGISMPIPVFGL. Topologically, residues 216-232 are extracellular; the sequence is QDDSKVFKEGSCLLADE. Residues 233-258 traverse the membrane as a helical segment; the sequence is NFVLIGSFVAFFIPLTIMVITYFLTI. Residues 259-321 are Cytoplasmic-facing; the sequence is KSLQKEATLC…QSISNEQKAC (63 aa). Phosphoserine is present on Ser-280. Residues 322–347 traverse the membrane as a helical segment; sequence KVLGIVFFLFVVMWCPFFITNIMAVI. Asn-342 serves as a coordination point for serotonin. Residues Cys-348 and Cys-352 are joined by a disulfide bond. Residues 348-355 are Extracellular-facing; that stretch reads CKESCNRD. Residues 356–381 traverse the membrane as a helical segment; sequence VIEALLNVFVWIGYLSSAVNPLVYTL. The NPxxY motif; important for ligand-induced conformation changes and signaling motif lies at 375–379; it reads NPLVY. Topologically, residues 382–470 are cytoplasmic; the sequence is FNKTYRSAFS…NTVNEKVSCV (89 aa). A disordered region spans residues 424–470; it reads QMGPKKNSKKDDKTTDNDCTMVALGKEHPEDAPADSSNTVNEKVSCV. Residues 458–470 show a composition bias toward polar residues; sequence DSSNTVNEKVSCV. The PDZ-binding signature appears at 468-470; sequence SCV.

The protein belongs to the G-protein coupled receptor 1 family. In terms of assembly, interacts (via C-terminus) with MPDZ and PATJ. May interact (via C-terminus) with MPP3, PRDX6, DLG4, DLG1, CASK, APBA1 and MAGI2. Interacts with GRM2 and DRD2; this may affect signaling.

The protein localises to the cell membrane. The protein resides in the cell projection. Its subcellular location is the dendrite. It is found in the axon. It localises to the cytoplasmic vesicle. The protein localises to the membrane. The protein resides in the caveola. Its subcellular location is the presynapse. G-protein coupled receptor activity is regulated by lipids: oleamide increases HTR2A-mediated activity. In terms of biological role, G-protein coupled receptor for 5-hydroxytryptamine (serotonin). Also functions as a receptor for various drugs and psychoactive substances, including mescaline, psilocybin, 1-(2,5-dimethoxy-4-iodophenyl)-2-aminopropane (DOI) and lysergic acid diethylamide (LSD). Ligand binding causes a conformation change that triggers signaling via guanine nucleotide-binding proteins (G proteins) and modulates the activity of downstream effectors. HTR2A is coupled to G(q)/G(11) G alpha proteins and activates phospholipase C-beta, releasing diacylglycerol (DAG) and inositol 1,4,5-trisphosphate (IP3) second messengers that modulate the activity of phosphatidylinositol 3-kinase and promote the release of Ca(2+) ions from intracellular stores, respectively. Beta-arrestin family members inhibit signaling via G proteins and mediate activation of alternative signaling pathways. Affects neural activity, perception, cognition and mood. Plays a role in the regulation of behavior, including responses to anxiogenic situations and psychoactive substances. Plays a role in intestinal smooth muscle contraction, and may play a role in arterial vasoconstriction. In Bos taurus (Bovine), this protein is 5-hydroxytryptamine receptor 2A (HTR2A).